The following is a 410-amino-acid chain: Multifunctional CCA protein (410 aa).

ATP is bound by residues glycine 8 and arginine 11. CTP contacts are provided by glycine 8 and arginine 11. Positions 21 and 23 each coordinate Mg(2+). ATP is bound by residues arginine 91, arginine 137, and arginine 140. Residues arginine 91, arginine 137, and arginine 140 each coordinate CTP. Residues 228–329 (TGIHSLMTLR…VKLLEQVDAF (102 aa)) enclose the HD domain.

This sequence belongs to the tRNA nucleotidyltransferase/poly(A) polymerase family. Bacterial CCA-adding enzyme type 1 subfamily. As to quaternary structure, monomer. Can also form homodimers and oligomers. The cofactor is Mg(2+). It depends on Ni(2+) as a cofactor.

The enzyme catalyses a tRNA precursor + 2 CTP + ATP = a tRNA with a 3' CCA end + 3 diphosphate. It catalyses the reaction a tRNA with a 3' CCA end + 2 CTP + ATP = a tRNA with a 3' CCACCA end + 3 diphosphate. Its function is as follows. Catalyzes the addition and repair of the essential 3'-terminal CCA sequence in tRNAs without using a nucleic acid template. Adds these three nucleotides in the order of C, C, and A to the tRNA nucleotide-73, using CTP and ATP as substrates and producing inorganic pyrophosphate. tRNA 3'-terminal CCA addition is required both for tRNA processing and repair. Also involved in tRNA surveillance by mediating tandem CCA addition to generate a CCACCA at the 3' terminus of unstable tRNAs. While stable tRNAs receive only 3'-terminal CCA, unstable tRNAs are marked with CCACCA and rapidly degraded. This is Multifunctional CCA protein from Legionella pneumophila (strain Lens).